The primary structure comprises 544 residues: Serine/threonine-protein kinase PAK 1 (544 aa).

Residues Met-1–Ser-79 form a disordered region. N-acetylserine is present on Ser-2. A Phosphoserine; by PKB and autocatalysis modification is found at Ser-21. A Phosphoserine; by autocatalysis modification is found at Ser-57. Basic and acidic residues predominate over residues Lys-68–Ser-79. An autoregulatory region region spans residues Lys-70 to Gln-140. Positions Ile-75–Gly-88 constitute a CRIB domain. The interval Ile-75–Arg-105 is GTPase-binding. Residue Thr-84 is modified to Phosphothreonine; by OXSR1. The residue at position 115 (Ser-115) is a Phosphoserine. A phosphotyrosine mark is found at Tyr-131 and Tyr-142. Ser-144 and Ser-149 each carry phosphoserine; by autocatalysis. Over residues Ala-150–Glu-166 the composition is skewed to polar residues. The disordered stretch occupies residues Ala-150 to His-195. The residue at position 153 (Tyr-153) is a Phosphotyrosine; by JAK2. Ser-174 bears the Phosphoserine mark. The segment covering Ser-174–Ala-183 has biased composition (acidic residues). Thr-184 carries the post-translational modification Phosphothreonine. Position 198 is a phosphoserine; by autocatalysis (Ser-198). At Tyr-200 the chain carries Phosphotyrosine; by JAK2. Position 203 is a phosphoserine; by autocatalysis (Ser-203). The tract at residues Pro-209 to Glu-250 is disordered. 2 positions are modified to phosphothreonine: Thr-211 and Thr-218. 2 positions are modified to phosphoserine: Ser-219 and Ser-222. Residues Ser-219–Pro-230 are compositionally biased toward polar residues. Phosphothreonine is present on residues Thr-224, Thr-228, and Thr-229. The Protein kinase domain occupies Tyr-269–Leu-520. An ATP-binding site is contributed by Ile-275–Val-283. Position 284 is a phosphotyrosine; by JAK2 (Tyr-284). Lys-298 contacts ATP. Asp-388 serves as the catalytic Proton acceptor. Thr-422 is modified (phosphothreonine; by autocatalysis, BRSK2 and PDPK1).

This sequence belongs to the protein kinase superfamily. STE Ser/Thr protein kinase family. STE20 subfamily. Homodimer in its autoinhibited state. Active as monomer. Interacts with GIT1. Component of cytoplasmic complexes, which also contains PXN, ARHGEF7 and GIT1. Interacts with NISCH. Interacts with DVL1; mediates the formation of a DVL1, MUSK and PAK1 ternary complex involved in AChR clustering. Binds to the caspase-cleaved p110 isoform of CDC2L1 and CDC2L2, p110C, but not the full-length proteins. Interacts with ARHGEF7. Interacts with SCRIB. Interacts with PDPK1. Interacts (via kinase domain) with RAF1. Interacts with NCK1 and NCK2. Interacts with TBCB. Interacts with BRSK2. Interacts tightly with GTP-bound but not GDP-bound CDC42/P21 and RAC1. Interacts with SNAI1. Interacts with CIB1 (via N-terminal region); the interaction is direct, promotes PAK1 activity and occurs in a calcium-dependent manner. Interacts with INPP5K. Interacts with gamma-tubulin. Interacts with RHOU; the interaction promotes PAK1 activation. Mg(2+) is required as a cofactor. In terms of processing, autophosphorylated in trans, meaning that in a dimer, one kinase molecule phosphorylates the other one. Activated by autophosphorylation at Thr-422 in response to a conformation change, triggered by interaction with GTP-bound CDC42 or RAC1. Activated by phosphorylation at Thr-422 by PDPK1. Phosphorylated by JAK2 in response to PRL; this increases PAK1 kinase activity. Phosphorylated at Ser-21 by PKB/AKT; this reduces interaction with NCK1 and association with focal adhesion sites. Activated by phosphorylation at Thr-422 by BRSK2. Upon DNA damage, phosphorylated at Thr-211 and translocates to the nucleoplasm. Phosphorylated at tyrosine residues, which can be enhanced by NTN1. As to expression, expressed predominantly in the brain, with higher expression in neuronal groups associated with motor function, and at lower levels in the spleen.

It localises to the cytoplasm. The protein localises to the cell junction. The protein resides in the focal adhesion. Its subcellular location is the cell projection. It is found in the lamellipodium. It localises to the cell membrane. The protein localises to the ruffle membrane. The protein resides in the invadopodium. Its subcellular location is the nucleus. It is found in the nucleoplasm. It localises to the chromosome. The protein localises to the cytoskeleton. The protein resides in the microtubule organizing center. Its subcellular location is the centrosome. The catalysed reaction is L-seryl-[protein] + ATP = O-phospho-L-seryl-[protein] + ADP + H(+). It carries out the reaction L-threonyl-[protein] + ATP = O-phospho-L-threonyl-[protein] + ADP + H(+). Phosphorylation of Thr-84 by OXSR1 inhibits activation. Activated by binding small G proteins. Binding of GTP-bound CDC42 or RAC1 to the autoregulatory region releases monomers from the autoinhibited dimer, and enables activation by phosphorylation of Thr-422. Protein kinase involved in intracellular signaling pathways downstream of integrins and receptor-type kinases that plays an important role in cytoskeleton dynamics, in cell adhesion, migration, proliferation, apoptosis, mitosis, and in vesicle-mediated transport processes. Can directly phosphorylate BAD and protects cells against apoptosis. Activated by interaction with CDC42 and RAC1. Functions as a GTPase effector that links the Rho-related GTPases CDC42 and RAC1 to the JNK MAP kinase pathway. Phosphorylates and activates MAP2K1, and thereby mediates activation of downstream MAP kinases. Involved in the reorganization of the actin cytoskeleton, actin stress fibers and of focal adhesion complexes. Phosphorylates the tubulin chaperone TBCB and thereby plays a role in the regulation of microtubule biogenesis and organization of the tubulin cytoskeleton. Plays a role in the regulation of insulin secretion in response to elevated glucose levels. Part of a ternary complex that contains PAK1, DVL1 and MUSK that is important for MUSK-dependent regulation of AChR clustering during the formation of the neuromuscular junction (NMJ). Activity is inhibited in cells undergoing apoptosis, potentially due to binding of CDC2L1 and CDC2L2. Phosphorylates MYL9/MLC2. Phosphorylates RAF1 at 'Ser-338' and 'Ser-339' resulting in: activation of RAF1, stimulation of RAF1 translocation to mitochondria, phosphorylation of BAD by RAF1, and RAF1 binding to BCL2. Phosphorylates SNAI1 at 'Ser-246' promoting its transcriptional repressor activity by increasing its accumulation in the nucleus. In podocytes, promotes NR3C2 nuclear localization. Required for atypical chemokine receptor ACKR2-induced phosphorylation of LIMK1 and cofilin (CFL1) and for the up-regulation of ACKR2 from endosomal compartment to cell membrane, increasing its efficiency in chemokine uptake and degradation. In synapses, seems to mediate the regulation of F-actin cluster formation performed by SHANK3, maybe through CFL1 phosphorylation and inactivation. Plays a role in RUFY3-mediated facilitating gastric cancer cells migration and invasion. In response to DNA damage, phosphorylates MORC2 which activates its ATPase activity and facilitates chromatin remodeling. In neurons, plays a crucial role in regulating GABA(A) receptor synaptic stability and hence GABAergic inhibitory synaptic transmission through its role in F-actin stabilization. In hippocampal neurons, necessary for the formation of dendritic spines and excitatory synapses; this function is dependent on kinase activity and may be exerted by the regulation of actomyosin contractility through the phosphorylation of myosin II regulatory light chain (MLC). Along with GIT1, positively regulates microtubule nucleation during interphase. Phosphorylates FXR1, promoting its localization to stress granules and activity. Phosphorylates ILK on 'Thr-173' and 'Ser-246', promoting nuclear export of ILK. The chain is Serine/threonine-protein kinase PAK 1 from Rattus norvegicus (Rat).